The primary structure comprises 228 residues: Glutamate transport system permease protein GluC (228 aa).

The next 5 membrane-spanning stretches (helical) occupy residues 16–36 (FWVT…FGTI), 64–84 (LTLV…LTLA), 100–120 (AVLG…RSGI), 145–165 (IIFP…LIAL), and 195–215 (LFVV…PMGL). In terms of domain architecture, ABC transmembrane type-1 spans 16 to 217 (FWVTIKLTIY…ILTLPMGLGL (202 aa)).

The protein belongs to the binding-protein-dependent transport system permease family. HisMQ subfamily. As to quaternary structure, the complex is composed of two ATP-binding proteins (GluA), two transmembrane proteins (GluC and GluD) and a solute-binding protein (GluB).

Its subcellular location is the cell membrane. Its function is as follows. Part of the ABC transporter complex GluABCD involved in glutamate uptake. Probably responsible for the translocation of the substrate across the membrane. The protein is Glutamate transport system permease protein GluC of Corynebacterium glutamicum (strain ATCC 13032 / DSM 20300 / JCM 1318 / BCRC 11384 / CCUG 27702 / LMG 3730 / NBRC 12168 / NCIMB 10025 / NRRL B-2784 / 534).